The chain runs to 393 residues: Lipoyl synthase, mitochondrial (393 aa).

Cys-115, Cys-120, Cys-126, Cys-146, Cys-150, Cys-153, and Ser-362 together coordinate [4Fe-4S] cluster. Residues 131–351 form the Radical SAM core domain; that stretch reads ETGTATATIM…RILGMDMGFR (221 aa).

This sequence belongs to the radical SAM superfamily. Lipoyl synthase family. The cofactor is [4Fe-4S] cluster.

It localises to the mitochondrion. It carries out the reaction [[Fe-S] cluster scaffold protein carrying a second [4Fe-4S](2+) cluster] + N(6)-octanoyl-L-lysyl-[protein] + 2 oxidized [2Fe-2S]-[ferredoxin] + 2 S-adenosyl-L-methionine + 4 H(+) = [[Fe-S] cluster scaffold protein] + N(6)-[(R)-dihydrolipoyl]-L-lysyl-[protein] + 4 Fe(3+) + 2 hydrogen sulfide + 2 5'-deoxyadenosine + 2 L-methionine + 2 reduced [2Fe-2S]-[ferredoxin]. The protein operates within protein modification; protein lipoylation via endogenous pathway; protein N(6)-(lipoyl)lysine from octanoyl-[acyl-carrier-protein]: step 2/2. In terms of biological role, catalyzes the radical-mediated insertion of two sulfur atoms into the C-6 and C-8 positions of the octanoyl moiety bound to the lipoyl domains of lipoate-dependent enzymes, thereby converting the octanoylated domains into lipoylated derivatives. In Vitis vinifera (Grape), this protein is Lipoyl synthase, mitochondrial.